The following is a 179-amino-acid chain: CASP-like protein 1F1 (179 aa).

The Cytoplasmic portion of the chain corresponds to Met1–Lys16. A helical transmembrane segment spans residues Leu17 to Thr37. Topologically, residues Trp38–Lys65 are extracellular. N-linked (GlcNAc...) asparagine glycosylation is present at Asn59. A helical transmembrane segment spans residues Phe66 to Cys86. Residues Ala87–Asp105 lie on the Cytoplasmic side of the membrane. A helical membrane pass occupies residues Leu106–Gly126. Topologically, residues Lys127–Thr150 are extracellular. A helical transmembrane segment spans residues Ile151–Ala171. Topologically, residues Asn172–Val179 are cytoplasmic.

The protein belongs to the Casparian strip membrane proteins (CASP) family. In terms of assembly, homodimer and heterodimers.

It is found in the cell membrane. The protein is CASP-like protein 1F1 of Ricinus communis (Castor bean).